The following is a 376-amino-acid chain: tRNA-specific 2-thiouridylase MnmA (376 aa).

Residues 14–21 and Met40 each bind ATP; that span reads GMSGGVDS. The segment at 100–102 is interaction with target base in tRNA; the sequence is NPD. The active-site Nucleophile is the Cys105. A disulfide bridge connects residues Cys105 and Cys202. Position 129 (Gly129) interacts with ATP. An interaction with tRNA region spans residues 152–154; it reads KDQ. Catalysis depends on Cys202, which acts as the Cysteine persulfide intermediate. The interaction with tRNA stretch occupies residues 315–316; the sequence is RY.

Belongs to the MnmA/TRMU family.

It localises to the cytoplasm. The enzyme catalyses S-sulfanyl-L-cysteinyl-[protein] + uridine(34) in tRNA + AH2 + ATP = 2-thiouridine(34) in tRNA + L-cysteinyl-[protein] + A + AMP + diphosphate + H(+). Catalyzes the 2-thiolation of uridine at the wobble position (U34) of tRNA, leading to the formation of s(2)U34. This is tRNA-specific 2-thiouridylase MnmA from Lactococcus lactis subsp. cremoris (strain SK11).